The primary structure comprises 1051 residues: Inactive tyrosine-protein kinase 7 (1051 aa).

The signal sequence occupies residues 1–22 (MAALRALLLLLAVGAQAAIRFA). Ig-like C2-type domains lie at 23–105 (KEPY…ANAS), 115–204 (SVVL…DNFT), 213–298 (PQAV…KATL), 308–388 (PFSP…LSIT), 393–472 (PKWV…GSIE), 487–566 (PPPQ…ATVQ), and 573–661 (VTFK…AFLY). Residues 23–685 (KEPYSQDALH…SHTPYKMIQT (663 aa)) are Extracellular-facing. The cysteines at positions 40 and 88 are disulfide-linked. N-linked (GlcNAc...) asparagine glycosylation is present at asparagine 103. Cysteine 137 and cysteine 187 are joined by a disulfide. N-linked (GlcNAc...) asparagine glycans are attached at residues asparagine 202, asparagine 255, and asparagine 264. Cystine bridges form between cysteine 234-cysteine 282, cysteine 326-cysteine 372, cysteine 414-cysteine 462, cysteine 505-cysteine 551, and cysteine 594-cysteine 645. 3 N-linked (GlcNAc...) asparagine glycosylation sites follow: asparagine 444, asparagine 548, and asparagine 627. Residues 686–706 (IGLSVGAAVAYIIIVLGLMFY) form a helical membrane-spanning segment. The Cytoplasmic portion of the chain corresponds to 707–1051 (CKKRRKAKRL…LGDSPADSKA (345 aa)). The 272-residue stretch at 777–1048 (LQTITTLGRG…AAALGDSPAD (272 aa)) folds into the Protein kinase; inactive domain.

It belongs to the protein kinase superfamily. Tyr protein kinase family. Insulin receptor subfamily. In terms of tissue distribution, expressed in bone marrow, spleen, bursa, thymus and brain. Weakly expressed in fibroblasts. Also expressed in embryonic liver.

It is found in the membrane. Functionally, inactive tyrosine kinase involved in Wnt signaling. pathway. The chain is Inactive tyrosine-protein kinase 7 (PTK7) from Gallus gallus (Chicken).